Consider the following 570-residue polypeptide: Proline--tRNA ligase (570 aa).

This sequence belongs to the class-II aminoacyl-tRNA synthetase family. ProS type 1 subfamily. As to quaternary structure, homodimer.

It is found in the cytoplasm. The catalysed reaction is tRNA(Pro) + L-proline + ATP = L-prolyl-tRNA(Pro) + AMP + diphosphate. In terms of biological role, catalyzes the attachment of proline to tRNA(Pro) in a two-step reaction: proline is first activated by ATP to form Pro-AMP and then transferred to the acceptor end of tRNA(Pro). As ProRS can inadvertently accommodate and process non-cognate amino acids such as alanine and cysteine, to avoid such errors it has two additional distinct editing activities against alanine. One activity is designated as 'pretransfer' editing and involves the tRNA(Pro)-independent hydrolysis of activated Ala-AMP. The other activity is designated 'posttransfer' editing and involves deacylation of mischarged Ala-tRNA(Pro). The misacylated Cys-tRNA(Pro) is not edited by ProRS. The sequence is that of Proline--tRNA ligase from Shewanella oneidensis (strain ATCC 700550 / JCM 31522 / CIP 106686 / LMG 19005 / NCIMB 14063 / MR-1).